Consider the following 744-residue polypeptide: Protein zyg-11 homolog B (744 aa).

3 LRR repeats span residues Leu-185–Lys-208, Met-216–Leu-236, and Lys-237–Gln-261.

This sequence belongs to the zyg-11 family. As to quaternary structure, interacts with ELOC/Elongin C. Part of an E3 ubiquitin ligase complex including ZYG11B, CUL2 and Elongin BC.

Functionally, serves as substrate adapter subunit in the E3 ubiquitin ligase complex ZYG11B-CUL2-Elongin BC. Acts redudantly with ZER1 to target substrates bearing N-terminal glycine degrons for proteasomal degradation. Involved in the clearance of proteolytic fragments generated by caspase cleavage during apoptosis since N-terminal glycine degrons are strongly enriched at caspase cleavage sites. Also important in the quality control of protein N-myristoylation in which N-terminal glycine degrons are conditionally exposed after a failure of N-myristoylation. This is Protein zyg-11 homolog B from Mus musculus (Mouse).